A 192-amino-acid chain; its full sequence is Large ribosomal subunit protein bL9 (192 aa).

A disordered region spans residues 172–192 (DALRPEDFFDPEADGVDEDEA). Over residues 179–192 (FFDPEADGVDEDEA) the composition is skewed to acidic residues.

It belongs to the bacterial ribosomal protein bL9 family.

Its function is as follows. Binds to the 23S rRNA. This is Large ribosomal subunit protein bL9 from Rhizobium johnstonii (strain DSM 114642 / LMG 32736 / 3841) (Rhizobium leguminosarum bv. viciae).